Reading from the N-terminus, the 361-residue chain is Membrane-bound lytic murein transglycosylase B (361 aa).

The signal sequence occupies residues 1-18 (MFKRRYVTLLPLFVLLAA). Residue C19 is the site of N-palmitoyl cysteine attachment. C19 carries the S-diacylglycerol cysteine lipid modification. E162 is a catalytic residue.

As to quaternary structure, monomer.

Its subcellular location is the cell outer membrane. The enzyme catalyses Exolytic cleavage of the (1-&gt;4)-beta-glycosidic linkage between N-acetylmuramic acid (MurNAc) and N-acetylglucosamine (GlcNAc) residues in peptidoglycan, from either the reducing or the non-reducing ends of the peptidoglycan chains, with concomitant formation of a 1,6-anhydrobond in the MurNAc residue.. Functionally, murein-degrading enzyme. Catalyzes the cleavage of the glycosidic bonds between N-acetylmuramic acid and N-acetylglucosamine residues in peptidoglycan. May play a role in recycling of muropeptides during cell elongation and/or cell division. The protein is Membrane-bound lytic murein transglycosylase B (mltB) of Escherichia coli (strain K12).